The chain runs to 971 residues: MELSDANLQTPTEYLKKTLDPDPAIRRPAEKFLESVEGNQNYPLLLLTLLEKSQDNVIKVCASVTFKNYIKRNWRIVEDEPNKICEADRVAIKANIVHLMLSSPEQIQKQLSDAISIIGREDFPQKWPDLLTEMVNRFQSGDFHVINGVLRTAHSLFKRYRHEFKSNELWTETKLVLDAFALPLTNLFKATIELCSTHANDASALRILFSSLILISKLFYSLNFQDLPEFFEDNMETWMNNFHTLLTLDNKLLQTDDEEEAGLLELLKSQICDNAALYAQKYDEEFQRYLPRFVTAIWNLLVTTGQEVKYDLLVSNAIQFLASVCERPHYKNLFEDQNTLTSICEKVIVPNMEFRAADEEAFEDNSEEYIRRDLEGSDIDTRRRAACDLVRGLCKFFEGPVTGIFSGYVNSMLQEYAKNPSVNWKHKDAAIYLVTSLASKAQTQKHGITQANELVNLTEFFVNHILPDLKSANVNEFPVLKADGIKYIMIFRNQVPKEHLLVSIPLLINHLQAESIVVHTYAAHALERLFTMRGPNNATLFTAAEIAPFVEILLTNLFKALTLPGSSENEYIMKAIMRSFSLLQEAIIPYIPTLITQLTQKLLAVSKNPSKPHFNHYMSEAICLSIRITCKANPAAVVNFEEALFLVFTEILQNDVQEFIPYVFQVMSLLLETHKNDIPSSYMALFPHLLQPVLWERTGNIPALVRLLQAFLERGSNTIASAAADKIPGLLGVFQKLIASKANDHQGFYLLNSIIEHMPPESVDQYRKQIFILLFQRLQNSKTTKFIKSFLVFINLYCIKYGALALQEIFDGIQPKMFGMVLEKIIIPEIQKVSGNVEKKICAVGITKLLTECPPMMDTEYTKLWTPLLQSLIGLFELPEDDTIPDEEHFIDIEDTPGYQTAFSQLAFAGKKEHDPVGQMVNNPKIHLAQSLHKLSTACPGRVPSMVSTSLNAEALQYLQGYLQAASVTLL.

N-acetylmethionine is present on M1. An Importin N-terminal domain is found at 29-102; sequence AEKFLESVEG…KANIVHLMLS (74 aa). At S112 the chain carries Phosphoserine. N6-acetyllysine is present on residues K574 and K824. Residue S931 is modified to Phosphoserine.

The protein belongs to the XPO2/CSE1 family. Found in a complex with CSE1L/XPO2, Ran and KPNA2. Binds with high affinity to importin-alpha only in the presence of RanGTP. The complex is dissociated by the combined action of RanBP1 and RanGAP1. Interacts with CFTR.

The protein resides in the cytoplasm. It is found in the nucleus. Its function is as follows. Export receptor for importin-alpha. Mediates importin-alpha re-export from the nucleus to the cytoplasm after import substrates (cargos) have been released into the nucleoplasm. In the nucleus binds cooperatively to importin-alpha and to the GTPase Ran in its active GTP-bound form. Docking of this trimeric complex to the nuclear pore complex (NPC) is mediated through binding to nucleoporins. Upon transit of a nuclear export complex into the cytoplasm, disassembling of the complex and hydrolysis of Ran-GTP to Ran-GDP (induced by RANBP1 and RANGAP1, respectively) cause release of the importin-alpha from the export receptor. CSE1L/XPO2 then return to the nuclear compartment and mediate another round of transport. The directionality of nuclear export is thought to be conferred by an asymmetric distribution of the GTP- and GDP-bound forms of Ran between the cytoplasm and nucleus. This chain is Exportin-2 (CSE1L), found in Pongo abelii (Sumatran orangutan).